The sequence spans 635 residues: Threonine--tRNA ligase (635 aa).

The TGS domain occupies 1–61 (MITVRLPDGS…EQDSDLSIIT (61 aa)). The interval 242-533 (DHRKLGRALD…LIENHAGALP (292 aa)) is catalytic. Zn(2+) is bound by residues Cys333, His384, and His510.

The protein belongs to the class-II aminoacyl-tRNA synthetase family. As to quaternary structure, homodimer. Zn(2+) serves as cofactor.

The protein resides in the cytoplasm. It catalyses the reaction tRNA(Thr) + L-threonine + ATP = L-threonyl-tRNA(Thr) + AMP + diphosphate + H(+). Its function is as follows. Catalyzes the attachment of threonine to tRNA(Thr) in a two-step reaction: L-threonine is first activated by ATP to form Thr-AMP and then transferred to the acceptor end of tRNA(Thr). Also edits incorrectly charged L-seryl-tRNA(Thr). The polypeptide is Threonine--tRNA ligase (Herminiimonas arsenicoxydans).